A 463-amino-acid polypeptide reads, in one-letter code: T-box transcription factor TBX1-A (463 aa).

Disordered stretches follow at residues 39-58 and 75-104; these read SPSP…PCSA and GASS…VKKN. Over residues 75 to 96 the composition is skewed to low complexity; the sequence is GASSSSCASSTPGSGSTGSSSS. A DNA-binding region (T-box) is located at residues 119-297; the sequence is LWDEFNQLGT…SNPFAKGFRD (179 aa). 2 disordered regions span residues 320-354 and 377-409; these read RSRN…PLHG and VPLS…PYKY. The segment covering 323–332 has biased composition (polar residues); that stretch reads NPVSSPTQNG. The segment covering 333 to 347 has biased composition (basic and acidic residues); sequence SDKDGDGRREYERDA. Positions 420 to 431 match the Nuclear localization signal motif; the sequence is KTRPAPYPLPTI.

Binds DNA as a dimer. Interacts with dscr6/ripply3.

It is found in the nucleus. Probable transcriptional regulator involved in developmental processes. Binds to the palindromic T site 5'-TTCACACCTAGGTGTGAA-3' DNA sequence. Induces pre-placodal ectoderm (PPE) gene expression in regions where RIPPLY3 is absent. Plays a role in the formation of the anteroposterior (AP) axis during embryonic development; required to establish the posterolateral border of the pre-placodal ectoderm (PPE) acting downstream of the retinoic acid receptor (RAR) signaling. The protein is T-box transcription factor TBX1-A (tbx1-a) of Xenopus laevis (African clawed frog).